Here is an 856-residue protein sequence, read N- to C-terminus: MGSLFRSESMCLAQLFLQSGTAYECLSALGEKGLVQFRDLNQNVSSFQRKFVGEVKRCEELERILVYLVQEITRADIPLPEGEASPPAPPLKHVLEMQEQLQKLEVELREVTKNKEKLRKNLLELVEYTHMLRVTKTFLKRNVEFEPTYEEFPALENDSLLDYSCMQRLGAKLGFVSGLIQQGRVEAFERMLWRACKGYTIVTYAELDECLEDPETGEVIKWYVFLISFWGEQIGHKVKKICDCYHCHIYPYPNTAEERREIQEGLNTRIQDLYTVLHKTEDYLRQVLCKAAESVCSRVVQVRKMKAIYHMLNMCSFDVTNKCLIAEVWCPEVDLPGLRRALEEGSRESGATIPSFMNTIPTKETPPTLIRTNKFTEGFQNIVDAYGVGSYREVNPALFTIITFPFLFAVMFGDFGHGFVMFLFALLLVLNENHPRLSQSQEILRMFFDGRYILLLMGLFSVYTGLIYNDCFSKSVNLFGSGWNVSAMYSSSHSPEEQRKMVLWNDSTIRHSRTLQLDPNIPGVFRGPYPFGIDPIWNLATNRLTFLNSFKMKMSVILGIFHMTFGVVLGIFNHLHFRKKFNVYLVSVPEILFMLCIFGYLIFMIIYKWLAYSAETSREAPSILIEFINMFLFPTSKTHGLYPGQAHVQRVLVALTVLAVPVLFLGKPLFLLWLHNGRNCFGMSRSGYTLVRKDSEEEVSLLGNQDIEEGNSRMEEGCREVTCEEFNFGEILMTQAIHSIEYCLGCISNTASYLRLWALSLAHAQLSDVLWAMLMRVGLRVDTTYGVLLLLPVMAFFAVLTIFILLVMEGLSAFLHAIRLHWVEFQNKFYVGAGTKFVPFSFSLLSSKFSNDDSIA.

The Cytoplasmic portion of the chain corresponds to 1–393 (MGSLFRSESM…DAYGVGSYRE (393 aa)). The chain crosses the membrane as a helical span at residues 394–412 (VNPALFTIITFPFLFAVMF). Residues 413–414 (GD) are Vacuolar-facing. Residues 415 to 431 (FGHGFVMFLFALLLVLN) traverse the membrane as a helical segment. Topologically, residues 432–445 (ENHPRLSQSQEILR) are cytoplasmic. A helical transmembrane segment spans residues 446-475 (MFFDGRYILLLMGLFSVYTGLIYNDCFSKS). At 476–549 (VNLFGSGWNV…ATNRLTFLNS (74 aa)) the chain is on the vacuolar side. The chain crosses the membrane as a helical span at residues 550 to 569 (FKMKMSVILGIFHMTFGVVL). Topologically, residues 570-587 (GIFNHLHFRKKFNVYLVS) are cytoplasmic. The chain crosses the membrane as a helical span at residues 588-608 (VPEILFMLCIFGYLIFMIIYK). Topologically, residues 609 to 651 (WLAYSAETSREAPSILIEFINMFLFPTSKTHGLYPGQAHVQRV) are vacuolar. The chain crosses the membrane as a helical span at residues 652-671 (LVALTVLAVPVLFLGKPLFL). The Cytoplasmic portion of the chain corresponds to 672–739 (LWLHNGRNCF…EILMTQAIHS (68 aa)). 2 positions are modified to phosphoserine: Ser-695 and Ser-700. The chain crosses the membrane as a helical span at residues 740–764 (IEYCLGCISNTASYLRLWALSLAHA). Over 765 to 785 (QLSDVLWAMLMRVGLRVDTTY) the chain is Vacuolar. Residues 786–824 (GVLLLLPVMAFFAVLTIFILLVMEGLSAFLHAIRLHWVE) form a helical membrane-spanning segment. Residues 825 to 856 (FQNKFYVGAGTKFVPFSFSLLSSKFSNDDSIA) are Cytoplasmic-facing.

Belongs to the V-ATPase 116 kDa subunit family. V-ATPase is a heteromultimeric enzyme made up of two complexes: the ATP-hydrolytic V1 complex and the proton translocation V0 complex. The V1 complex consists of three catalytic AB heterodimers that form a heterohexamer, three peripheral stalks each consisting of EG heterodimers, one central rotor including subunits D and F, and the regulatory subunits C and H. The proton translocation complex V0 consists of the proton transport subunit a, a ring of proteolipid subunits c9c'', rotary subunit d, subunits e and f, and the accessory subunits ATP6AP1/Ac45 and ATP6AP2/PRR. Directly interacts with PSCD2 through its N-terminal cytosolic tail in an intra-endosomal acidification-dependent manner. Disruption of this interaction results in the inhibition of endocytosis. Interacts with SPAAR. Relatively high expression in kidney and liver. Lower levels in the spleen, testis, and skeletal muscle. Also expressed in the thymus.

Its subcellular location is the cell membrane. The protein localises to the endosome membrane. In terms of biological role, subunit of the V0 complex of vacuolar(H+)-ATPase (V-ATPase), a multisubunit enzyme composed of a peripheral complex (V1) that hydrolyzes ATP and a membrane integral complex (V0) that translocates protons. V-ATPase is responsible for acidifying and maintaining the pH of intracellular compartments and in some cell types, is targeted to the plasma membrane, where it is responsible for acidifying the extracellular environment. Essential component of the endosomal pH-sensing machinery. May play a role in maintaining the Golgi functions, such as glycosylation maturation, by controlling the Golgi pH. In aerobic conditions, involved in intracellular iron homeostasis, thus triggering the activity of Fe(2+) prolyl hydroxylase (PHD) enzymes, and leading to HIF1A hydroxylation and subsequent proteasomal degradation. The chain is V-type proton ATPase 116 kDa subunit a 2 (Atp6v0a2) from Mus musculus (Mouse).